Reading from the N-terminus, the 255-residue chain is Anamorsin homolog (255 aa).

The interval 1-163 (MPKETLVVSK…VRPNWKSKTD (163 aa)) is N-terminal SAM-like domain. The interval 164 to 185 (KKSPSMIDAAPIDGYISKAPDY) is linker. Residues Cys188, Cys195, Cys198, and Cys200 each contribute to the [2Fe-2S] cluster site. Residues 188-200 (CSTKPRACANCTC) are fe-S binding site A. Positions 224, 227, 235, and 238 each coordinate [4Fe-4S] cluster. Short sequence motifs (cx2C motif) lie at residues 224 to 227 (CGNC) and 235 to 238 (CESC). The segment at 224 to 238 (CGNCYLGDAFRCESC) is fe-S binding site B.

Belongs to the anamorsin family. As to quaternary structure, monomer. It depends on [2Fe-2S] cluster as a cofactor. [4Fe-4S] cluster is required as a cofactor.

The protein localises to the cytoplasm. It localises to the mitochondrion intermembrane space. Component of the cytosolic iron-sulfur (Fe-S) protein assembly (CIA) machinery. Required for the maturation of extramitochondrial Fe-S proteins. Part of an electron transfer chain functioning in an early step of cytosolic Fe-S biogenesis, facilitating the de novo assembly of a [4Fe-4S] cluster on the cytosolic Fe-S scaffold complex. Electrons are transferred from NADPH via a FAD- and FMN-containing diflavin oxidoreductase. Together with the diflavin oxidoreductase, also required for the assembly of the diferric tyrosyl radical cofactor of ribonucleotide reductase (RNR), probably by providing electrons for reduction during radical cofactor maturation in the catalytic small subunit. The chain is Anamorsin homolog from Theileria annulata.